Consider the following 784-residue polypeptide: Ubiquitin carboxyl-terminal hydrolase 1 (784 aa).

Disordered stretches follow at residues 1–21 and 33–54; these read MPGV…SKKN and TKRA…EYRG. Residues 7 to 16 show a composition bias toward polar residues; that stretch reads SESNGLSRGS. A phosphoserine mark is found at serine 16, serine 42, and serine 67. In terms of domain architecture, USP spans 81–784; it reads VGLNNLGNTC…TPYLLFYKKL (704 aa). Cysteine 90 acts as the Nucleophile in catalysis. Composition is skewed to basic and acidic residues over residues 232-243 and 252-264; these read KVEEKSLQKEET and DSTR…KEQL. 2 disordered regions span residues 232-341 and 363-411; these read KVEE…KINW and TNQR…SSEA. Positions 389 to 407 are enriched in polar residues; the sequence is NTVNGSGPASPGSSVTPVD. Serine 475 is modified (phosphoserine). Histidine 593 (proton acceptor) is an active-site residue. The segment at 686–723 is disordered; the sequence is PEKVVGTPFTDSRNSETNDTNGTQESDRSKESSDQTGI. Residues 694–709 are compositionally biased toward polar residues; it reads FTDSRNSETNDTNGTQ. Serine 767 is subject to Phosphoserine.

It belongs to the peptidase C19 family. In terms of assembly, interacts with FANCD2 and PCNA. Interacts with WDR48. Interacts with ATAD5; the interaction regulates USP1-mediated PCNA deubiquitination. Post-translationally, autocatalytic cleavage of USP1 following UV irradiation inactivates it, leading to an increase in ubiquitinated PCNA, recruitment of POLH and translesion synthesis. Ubiquitinated by the CRL2(KLHDC2) complex following autocatalytic cleavage, leading to its degradation: the CRL2(KLHDC2) complex recognizes the diglycine (Gly-Gly) at the C-terminus.

It is found in the nucleus. The enzyme catalyses Thiol-dependent hydrolysis of ester, thioester, amide, peptide and isopeptide bonds formed by the C-terminal Gly of ubiquitin (a 76-residue protein attached to proteins as an intracellular targeting signal).. Negative regulator of DNA damage repair which specifically deubiquitinates monoubiquitinated FANCD2. Also involved in PCNA-mediated translesion synthesis (TLS) by deubiquitinating monoubiquitinated PCNA. Has almost no deubiquitinating activity by itself and requires the interaction with WDR48 to have a high activity. In Rattus norvegicus (Rat), this protein is Ubiquitin carboxyl-terminal hydrolase 1.